The sequence spans 211 residues: Phosphoserine phosphatase (211 aa).

Asp-11 functions as the Nucleophile in the catalytic mechanism. Residues Asp-11 and Asp-13 each coordinate Mg(2+). Asp-13 serves as the catalytic Proton donor. Residues Glu-20, Arg-56, 99–100, and Lys-144 contribute to the substrate site; that span reads SG. Asp-167 lines the Mg(2+) pocket. Position 170 (Asn-170) interacts with substrate.

It belongs to the HAD-like hydrolase superfamily. SerB family. The cofactor is Mg(2+).

The catalysed reaction is O-phospho-L-serine + H2O = L-serine + phosphate. It carries out the reaction O-phospho-D-serine + H2O = D-serine + phosphate. It functions in the pathway amino-acid biosynthesis; L-serine biosynthesis; L-serine from 3-phospho-D-glycerate: step 3/3. The sequence is that of Phosphoserine phosphatase from Methanocaldococcus jannaschii (strain ATCC 43067 / DSM 2661 / JAL-1 / JCM 10045 / NBRC 100440) (Methanococcus jannaschii).